Reading from the N-terminus, the 408-residue chain is Flavohemoprotein (408 aa).

In terms of domain architecture, Globin spans 1 to 138 (MLSEKTIRIV…LADIFIGREG (138 aa)). Residue H85 participates in heme b binding. Residues Y95 and E137 each act as charge relay system in the active site. The interval 149 to 408 (GGWNGTRTFV…FGPKEELVAV (260 aa)) is reductase. The FAD-binding FR-type domain maps to 152 to 263 (NGTRTFVVTK…GPPCGEFTVD (112 aa)). FAD is bound by residues Y190 and 205–208 (RNYS). 277–282 (GIGVTP) contacts NADP(+). 398–401 (FFGP) is a binding site for FAD.

It belongs to the globin family. Two-domain flavohemoproteins subfamily. In the C-terminal section; belongs to the flavoprotein pyridine nucleotide cytochrome reductase family. Requires heme b as cofactor. The cofactor is FAD.

It carries out the reaction 2 nitric oxide + NADPH + 2 O2 = 2 nitrate + NADP(+) + H(+). It catalyses the reaction 2 nitric oxide + NADH + 2 O2 = 2 nitrate + NAD(+) + H(+). The chain is Flavohemoprotein from Rhodopirellula baltica (strain DSM 10527 / NCIMB 13988 / SH1).